The following is a 718-amino-acid chain: Gephyrin (718 aa).

The segment covering methionine 1–glutamine 19 has biased composition (polar residues). Positions methionine 1–glycine 26 are disordered. Residues glutamate 31–glutamate 176 form an MPT Mo-transferase region. The segment covering asparagine 222–serine 244 has biased composition (low complexity). 2 disordered regions span residues asparagine 222–asparagine 266 and threonine 344–aspartate 364. Over residues histidine 245 to serine 254 the composition is skewed to basic residues. The tract at residues lysine 260–asparagine 718 is MPT adenylyltransferase.

It in the N-terminal section; belongs to the MoaB/Mog family. The protein in the C-terminal section; belongs to the MoeA family. In terms of assembly, homotrimer, homodimer and homooligomer. Mg(2+) serves as cofactor.

Its subcellular location is the cell membrane. The protein resides in the cytoplasm. It is found in the cytosol. The protein localises to the cytoskeleton. The catalysed reaction is molybdopterin + ATP + H(+) = adenylyl-molybdopterin + diphosphate. The enzyme catalyses adenylyl-molybdopterin + molybdate = Mo-molybdopterin + AMP + H(+). The protein operates within cofactor biosynthesis; molybdopterin biosynthesis. In terms of biological role, microtubule-associated protein involved in membrane protein-cytoskeleton interactions. Functionally, also has a catalytic activity and catalyzes two steps in the biosynthesis of the molybdenum cofactor. In the first step, molybdopterin is adenylated. Subsequently, molybdate is inserted into adenylated molybdopterin and AMP is released. The polypeptide is Gephyrin (gphn) (Dictyostelium discoideum (Social amoeba)).